The primary structure comprises 101 residues: Apolipoprotein C-II (101 aa).

Residues 1 to 22 (MGTRFLLALFLVLLVLGFEVQG) form the signal peptide. The lipid binding stretch occupies residues 66–74 (AVDEKLRDM). The lipoprotein lipase cofactor stretch occupies residues 78 to 101 (STAAVSTYAGIFTDQVLSMLRGEE).

This sequence belongs to the apolipoprotein C2 family. In terms of processing, proapolipoprotein C-II is synthesized as a sialic acid containing glycoprotein which is subsequently desialylated prior to its proteolytic processing. Post-translationally, proapolipoprotein C-II, the major form found in plasma undergoes proteolytic cleavage of its N-terminal hexapeptide to generate apolipoprotein C-II, which occurs as the minor form in plasma.

It is found in the secreted. Component of chylomicrons, very low-density lipoproteins (VLDL), low-density lipoproteins (LDL), and high-density lipoproteins (HDL) in plasma. Plays an important role in lipoprotein metabolism as an activator of lipoprotein lipase. Both proapolipoprotein C-II and apolipoprotein C-II can activate lipoprotein lipase. This Saimiri boliviensis boliviensis (Bolivian squirrel monkey) protein is Apolipoprotein C-II (APOC2).